The chain runs to 893 residues: Desmocollin-1 (893 aa).

The N-terminal stretch at 1–29 (MAVASAAPGSIFWKQLLFSLLVLILFCDA) is a signal peptide. Residues 30 to 132 (CQKISLQVPS…KDAVLRRTKR (103 aa)) constitute a propeptide that is removed on maturation. 5 Cadherin domains span residues 133–240 (RWAP…APYF), 241–352 (ENKL…APYF), 353–470 (TETS…GPEC), 471–574 (QPPV…DHPP), and 575–682 (QIKQ…LSRE). Topologically, residues 133–692 (RWAPIPCSLM…AALANVFLGK (560 aa)) are extracellular. Residue N163 is glycosylated (N-linked (GlcNAc...) asparagine). T383 carries the phosphothreonine modification. Residues N398 and N545 are each glycosylated (N-linked (GlcNAc...) asparagine). A helical membrane pass occupies residues 693-715 (WAILAMVLGSVLLLCILFTCFCV). Over 716 to 893 (TVKKTVKKCF…RTLAKTCVKK (178 aa)) the chain is Cytoplasmic.

In terms of assembly, binds to JUP/plakoglobin. Isoform 1A is phosphorylated on a serine but isoform 1B is not. As to expression, epidermis and weakly in tongue papillae.

It localises to the cell membrane. The protein resides in the cell junction. The protein localises to the desmosome. In terms of biological role, a component of desmosome cell-cell junctions which are required for positive regulation of cellular adhesion. Required for desmosome adhesion strength between the granular layers of the epidermis, as a result moderates epidermal proliferation and differentiation. Is therefore required to maintain postnatal epidermal barrier function and normal hair follicle morphology into adulthood. This chain is Desmocollin-1 (DSC1), found in Bos taurus (Bovine).